Here is a 393-residue protein sequence, read N- to C-terminus: NAD(P)H-quinone oxidoreductase subunit H, chloroplastic (393 aa).

This sequence belongs to the complex I 49 kDa subunit family. In terms of assembly, NDH is composed of at least 16 different subunits, 5 of which are encoded in the nucleus.

The protein resides in the plastid. The protein localises to the chloroplast thylakoid membrane. The enzyme catalyses a plastoquinone + NADH + (n+1) H(+)(in) = a plastoquinol + NAD(+) + n H(+)(out). The catalysed reaction is a plastoquinone + NADPH + (n+1) H(+)(in) = a plastoquinol + NADP(+) + n H(+)(out). In terms of biological role, NDH shuttles electrons from NAD(P)H:plastoquinone, via FMN and iron-sulfur (Fe-S) centers, to quinones in the photosynthetic chain and possibly in a chloroplast respiratory chain. The immediate electron acceptor for the enzyme in this species is believed to be plastoquinone. Couples the redox reaction to proton translocation, and thus conserves the redox energy in a proton gradient. This chain is NAD(P)H-quinone oxidoreductase subunit H, chloroplastic, found in Draba nemorosa (Woodland whitlowgrass).